The chain runs to 133 residues: Small ribosomal subunit protein uS8 (133 aa).

The protein belongs to the universal ribosomal protein uS8 family. In terms of assembly, part of the 30S ribosomal subunit. Contacts proteins S5 and S12.

In terms of biological role, one of the primary rRNA binding proteins, it binds directly to 16S rRNA central domain where it helps coordinate assembly of the platform of the 30S subunit. In Chloroflexus aurantiacus (strain ATCC 29364 / DSM 637 / Y-400-fl), this protein is Small ribosomal subunit protein uS8.